The primary structure comprises 379 residues: Probable RNA methyltransferase RB6963 (379 aa).

Glu89 acts as the Proton acceptor in catalysis. Positions 96 to 332 (ATGRTTLCVS…VRYSLGNDIE (237 aa)) constitute a Radical SAM core domain. Residues Cys103 and Cys335 are joined by a disulfide bond. The [4Fe-4S] cluster site is built by Cys110, Cys114, and Cys117. S-adenosyl-L-methionine contacts are provided by residues 160 to 161 (GE), Ser192, 215 to 217 (SLH), and Asn291. The S-methylcysteine intermediate role is filled by Cys335.

This sequence belongs to the radical SAM superfamily. RlmN family. It depends on [4Fe-4S] cluster as a cofactor.

Its subcellular location is the cytoplasm. This is Probable RNA methyltransferase RB6963 from Rhodopirellula baltica (strain DSM 10527 / NCIMB 13988 / SH1).